Here is a 233-residue protein sequence, read N- to C-terminus: UPF0758 protein Rcas_0037 (233 aa).

The 123-residue stretch at 107–229 (QIRSPTDAAQ…FVSMRERGLA (123 aa)) folds into the MPN domain. Residues H178, H180, and D191 each coordinate Zn(2+). Residues 178-191 (HNHPSGDPTPSPED) carry the JAMM motif motif.

It belongs to the UPF0758 family.

In Roseiflexus castenholzii (strain DSM 13941 / HLO8), this protein is UPF0758 protein Rcas_0037.